The primary structure comprises 328 residues: Phosphate acyltransferase (328 aa).

It belongs to the PlsX family. Homodimer. Probably interacts with PlsY.

It localises to the cytoplasm. It carries out the reaction a fatty acyl-[ACP] + phosphate = an acyl phosphate + holo-[ACP]. The protein operates within lipid metabolism; phospholipid metabolism. Catalyzes the reversible formation of acyl-phosphate (acyl-PO(4)) from acyl-[acyl-carrier-protein] (acyl-ACP). This enzyme utilizes acyl-ACP as fatty acyl donor, but not acyl-CoA. This chain is Phosphate acyltransferase, found in Geobacillus thermodenitrificans (strain NG80-2).